Reading from the N-terminus, the 466-residue chain is Sucrose-6-phosphate hydrolase (466 aa).

Substrate is bound by residues 38 to 41 (LLND), Gln-57, 100 to 101 (YS), 159 to 160 (RD), and Glu-218. Residue Asp-41 is part of the active site.

The protein resides in the cytoplasm. The enzyme catalyses Hydrolysis of terminal non-reducing beta-D-fructofuranoside residues in beta-D-fructofuranosides.. It participates in glycan biosynthesis; sucrose metabolism. Its function is as follows. Hydrolyzes sucrose and sucrose-6P, but fails to hydrolyze any of the phosphorylated isomers of sucrose and other phospho-D-glucosides, including maltose-6'P and trehalose-6P. The protein is Sucrose-6-phosphate hydrolase (scrB) of Klebsiella pneumoniae.